The chain runs to 155 residues: Small ribosomal subunit protein uS7cz/uS7cy (155 aa).

Belongs to the universal ribosomal protein uS7 family. In terms of assembly, part of the 30S ribosomal subunit.

It is found in the plastid. Its subcellular location is the chloroplast. Its function is as follows. One of the primary rRNA binding proteins, it binds directly to 16S rRNA where it nucleates assembly of the head domain of the 30S subunit. In Crucihimalaya wallichii (Rock-cress), this protein is Small ribosomal subunit protein uS7cz/uS7cy (rps7-A).